Here is a 199-residue protein sequence, read N- to C-terminus: MPKPTKGPRLGGSSSHQSALLANLATSLFEHGRIKTTEPKARALRPYAEKLITHAKKGALHNRREVMKKIRDKDVVHTLFAEIGPFYADRNGGYTRIIKVENRKGDNAPMAVIELVREKTVTDEANRARRAAASQAKADERADEKADEKAEETVEETTEAPAEESTEAAAEETVEETTEAPAEESTEAAEESEAKDDTK.

Positions 123–199 are disordered; it reads DEANRARRAA…EESEAKDDTK (77 aa). The span at 137–152 shows a compositional bias: basic and acidic residues; that stretch reads KADERADEKADEKAEE. Residues 153–199 show a composition bias toward acidic residues; the sequence is TVEETTEAPAEESTEAAAEETVEETTEAPAEESTEAAEESEAKDDTK.

It belongs to the bacterial ribosomal protein bL17 family. Part of the 50S ribosomal subunit. Contacts protein L32.

In Mycolicibacterium smegmatis (strain ATCC 700084 / mc(2)155) (Mycobacterium smegmatis), this protein is Large ribosomal subunit protein bL17.